Here is a 611-residue protein sequence, read N- to C-terminus: UvrABC system protein C (611 aa).

The GIY-YIG domain maps to 19–97; it reads QRPGVYRMVD…IKELRPRYNV (79 aa). The UVR domain maps to 207–242; it reads NQVIEELGARMEAASERLEFEAAAQYRDRIQALQAV.

The protein belongs to the UvrC family. Interacts with UvrB in an incision complex.

The protein resides in the cytoplasm. In terms of biological role, the UvrABC repair system catalyzes the recognition and processing of DNA lesions. UvrC both incises the 5' and 3' sides of the lesion. The N-terminal half is responsible for the 3' incision and the C-terminal half is responsible for the 5' incision. The polypeptide is UvrABC system protein C (Alkalilimnicola ehrlichii (strain ATCC BAA-1101 / DSM 17681 / MLHE-1)).